The chain runs to 374 residues: Putative heme chaperone HemW-like protein (374 aa).

Residues 1-231 (MKLLGLYINI…EKLLKKSGYK (231 aa)) enclose the Radical SAM core domain.

It belongs to the anaerobic coproporphyrinogen-III oxidase family. HemW subfamily.

Its subcellular location is the cytoplasm. Its function is as follows. Might be a heme chaperone; in E.coli heme binds independently of binding to [4Fe-4S] or S-adenosyl-L-methionine. The protein is Putative heme chaperone HemW-like protein of Buchnera aphidicola subsp. Baizongia pistaciae (strain Bp).